Reading from the N-terminus, the 190-residue chain is Imidazoleglycerol-phosphate dehydratase (190 aa).

This sequence belongs to the imidazoleglycerol-phosphate dehydratase family.

The protein localises to the cytoplasm. The enzyme catalyses D-erythro-1-(imidazol-4-yl)glycerol 3-phosphate = 3-(imidazol-4-yl)-2-oxopropyl phosphate + H2O. The protein operates within amino-acid biosynthesis; L-histidine biosynthesis; L-histidine from 5-phospho-alpha-D-ribose 1-diphosphate: step 6/9. In Campylobacter fetus subsp. fetus (strain 82-40), this protein is Imidazoleglycerol-phosphate dehydratase.